Here is a 121-residue protein sequence, read N- to C-terminus: Phosphoribosyl-AMP cyclohydrolase (121 aa).

Residue D76 participates in Mg(2+) binding. A Zn(2+)-binding site is contributed by C77. Mg(2+)-binding residues include D78 and D80. Zn(2+) contacts are provided by C93 and C100.

The protein belongs to the PRA-CH family. Homodimer. Requires Mg(2+) as cofactor. It depends on Zn(2+) as a cofactor.

It localises to the cytoplasm. It carries out the reaction 1-(5-phospho-beta-D-ribosyl)-5'-AMP + H2O = 1-(5-phospho-beta-D-ribosyl)-5-[(5-phospho-beta-D-ribosylamino)methylideneamino]imidazole-4-carboxamide. Its pathway is amino-acid biosynthesis; L-histidine biosynthesis; L-histidine from 5-phospho-alpha-D-ribose 1-diphosphate: step 3/9. Catalyzes the hydrolysis of the adenine ring of phosphoribosyl-AMP. The sequence is that of Phosphoribosyl-AMP cyclohydrolase from Methanococcoides burtonii (strain DSM 6242 / NBRC 107633 / OCM 468 / ACE-M).